A 420-amino-acid polypeptide reads, in one-letter code: Phosphatidylinositol 5-phosphate 4-kinase type-2 gamma (420 aa).

Ala-2 is subject to N-acetylalanine. Ser-26 carries the post-translational modification Phosphoserine. The region spanning 43–419 (AADPLVGVFL…RFLDFISNIF (377 aa)) is the PIPK domain. The interval 69-75 (VMLLPDD) is required for interaction with PIP5K1A. Phosphoserine is present on Ser-349.

Interacts with PIP5K1A; the interaction inhibits PIP5K1A kinase activity. Post-translationally, phosphorylated, phosphorylation is induced by EGF. In terms of tissue distribution, widely expressed, with the most abundant expression in kidney.

Its subcellular location is the endoplasmic reticulum. The protein localises to the cytoplasm. The catalysed reaction is a 1,2-diacyl-sn-glycero-3-phospho-(1D-myo-inositol-5-phosphate) + ATP = a 1,2-diacyl-sn-glycero-3-phospho-(1D-myo-inositol-4,5-bisphosphate) + ADP + H(+). It catalyses the reaction 1,2-dihexadecanoyl-sn-glycero-3-phospho-(1D-myo-inositol-5-phosphate) + ATP = 1,2-dihexadecanoyl-sn-glycero-3-phospho-(1D-myo-inositol-4,5-bisphosphate) + ADP + H(+). The enzyme catalyses 1,2-dihexadecanoyl-sn-glycero-3-phospho-(1D-myo-inositol-5-phosphate) + GTP = 1,2-dihexadecanoyl-sn-glycero-3-phospho-(1D-myo-inositol-4,5-bisphosphate) + GDP + H(+). Functionally, phosphatidylinositol 5-phosphate 4-kinase with low enzymatic activity. May be a GTP sensor, has higher GTP-dependent kinase activity than ATP-dependent kinase activity. PIP4Ks negatively regulate insulin signaling through a catalytic-independent mechanism. They interact with PIP5Ks and suppress PIP5K-mediated PtdIns(4,5)P2 synthesis and insulin-dependent conversion to PtdIns(3,4,5)P3. This Rattus norvegicus (Rat) protein is Phosphatidylinositol 5-phosphate 4-kinase type-2 gamma.